The chain runs to 610 residues: Zinc metalloproteinase-disintegrin-like 4a (610 aa).

Positions 1 to 20 are cleaved as a signal peptide; sequence MIQVLLVTISLAVFPYQGSS. A propeptide spanning residues 21-189 is cleaved from the precursor; sequence VILESGNVND…KKASQSNLTP (169 aa). The 197-residue stretch at 199–395 folds into the Peptidase M12B domain; sequence KYVKLFLVAD…NMPQCILKKP (197 aa). Asn-218 carries an N-linked (GlcNAc...) asparagine glycan. Position 286 (Asp-286) interacts with Ca(2+). 3 cysteine pairs are disulfide-bonded: Cys-310–Cys-390, Cys-350–Cys-374, and Cys-352–Cys-357. Residue His-335 participates in Zn(2+) binding. Glu-336 is an active-site residue. Zn(2+) is bound by residues His-339 and His-345. Residues Cys-390, Val-405, Asn-408, Phe-410, Glu-412, Glu-415, and Asp-418 each coordinate Ca(2+). A Disintegrin domain is found at 403 to 488; sequence PAVCGNYFVE…AECTDSFQRN (86 aa). Intrachain disulfides connect Cys-406/Cys-435, Cys-417/Cys-430, Cys-419/Cys-425, Cys-429/Cys-452, Cys-443/Cys-449, Cys-448/Cys-474, Cys-461/Cys-481, Cys-468/Cys-499, Cys-492/Cys-504, Cys-511/Cys-561, Cys-526/Cys-572, Cys-539/Cys-549, Cys-556/Cys-598, and Cys-592/Cys-603. The short motif at 467–469 is the D/ECD-tripeptide element; sequence ECD.

The protein belongs to the venom metalloproteinase (M12B) family. P-III subfamily. Zn(2+) serves as cofactor. In terms of tissue distribution, expressed by the venom gland.

It is found in the secreted. In terms of biological role, snake venom metalloproteinase that impairs hemostasis in the envenomed animal. This is Zinc metalloproteinase-disintegrin-like 4a from Crotalus adamanteus (Eastern diamondback rattlesnake).